Consider the following 529-residue polypeptide: Bifunctional purine biosynthesis protein PurH (529 aa).

Positions 1–148 (MQQRRPVRRA…KNHKDVAIVV (148 aa)) constitute an MGS-like domain. Lys287 is subject to N6-acetyllysine.

It belongs to the PurH family.

It carries out the reaction (6R)-10-formyltetrahydrofolate + 5-amino-1-(5-phospho-beta-D-ribosyl)imidazole-4-carboxamide = 5-formamido-1-(5-phospho-D-ribosyl)imidazole-4-carboxamide + (6S)-5,6,7,8-tetrahydrofolate. It catalyses the reaction IMP + H2O = 5-formamido-1-(5-phospho-D-ribosyl)imidazole-4-carboxamide. It functions in the pathway purine metabolism; IMP biosynthesis via de novo pathway; 5-formamido-1-(5-phospho-D-ribosyl)imidazole-4-carboxamide from 5-amino-1-(5-phospho-D-ribosyl)imidazole-4-carboxamide (10-formyl THF route): step 1/1. The protein operates within purine metabolism; IMP biosynthesis via de novo pathway; IMP from 5-formamido-1-(5-phospho-D-ribosyl)imidazole-4-carboxamide: step 1/1. In Escherichia coli O8 (strain IAI1), this protein is Bifunctional purine biosynthesis protein PurH.